Reading from the N-terminus, the 465-residue chain is Cytochrome P450 85A1 (465 aa).

The helical transmembrane segment at 2 to 22 (GAMMVMMGLLLIIVSLCSALL) threads the bilayer. Cysteine 415 provides a ligand contact to heme.

The protein belongs to the cytochrome P450 family. The cofactor is heme. As to expression, mainly expressed in apical shoots, hypocotyls, siliques and roots. Also present in the female gametophyte.

The protein localises to the membrane. The enzyme catalyses 6-deoxoteasterone + reduced [NADPH--hemoprotein reductase] + O2 = 6alpha-hydroxyteasterone + oxidized [NADPH--hemoprotein reductase] + H2O + H(+). It catalyses the reaction 6alpha-hydroxytyphasterol + reduced [NADPH--hemoprotein reductase] + O2 = teasterone + oxidized [NADPH--hemoprotein reductase] + 2 H2O + H(+). The catalysed reaction is 3-dehydro-6-deoxoteasterone + reduced [NADPH--hemoprotein reductase] + O2 = 3-dehydro-6alpha-hydroxyteasterone + oxidized [NADPH--hemoprotein reductase] + H2O + H(+). It carries out the reaction 3-dehydro-6alpha-hydroxyteasterone + reduced [NADPH--hemoprotein reductase] + O2 = 3-dehydroteasterone + oxidized [NADPH--hemoprotein reductase] + 2 H2O + H(+). The enzyme catalyses 6-deoxotyphasterol + reduced [NADPH--hemoprotein reductase] + O2 = 6alpha-hydroxytyphasterol + oxidized [NADPH--hemoprotein reductase] + H2O + H(+). It catalyses the reaction 6alpha-hydroxytyphasterol + reduced [NADPH--hemoprotein reductase] + O2 = typhasterol + oxidized [NADPH--hemoprotein reductase] + 2 H2O + H(+). The catalysed reaction is 6-deoxocastasterone + reduced [NADPH--hemoprotein reductase] + O2 = 6alpha-hydroxycastasterone + oxidized [NADPH--hemoprotein reductase] + H2O + H(+). It carries out the reaction 6alpha-hydroxycastasterone + reduced [NADPH--hemoprotein reductase] + O2 = castasterone + oxidized [NADPH--hemoprotein reductase] + 2 H2O + H(+). The enzyme catalyses 6-deoxocastasterone + 2 reduced [NADPH--hemoprotein reductase] + 2 O2 = castasterone + 2 oxidized [NADPH--hemoprotein reductase] + 3 H2O + 2 H(+). It catalyses the reaction 6-deoxoteasterone + 2 reduced [NADPH--hemoprotein reductase] + 2 O2 = teasterone + 2 oxidized [NADPH--hemoprotein reductase] + 3 H2O + 2 H(+). The catalysed reaction is 6-deoxotyphasterol + 2 reduced [NADPH--hemoprotein reductase] + 2 O2 = typhasterol + 2 oxidized [NADPH--hemoprotein reductase] + 3 H2O + 2 H(+). It carries out the reaction 3-dehydro-6-deoxoteasterone + 2 reduced [NADPH--hemoprotein reductase] + 2 O2 = 3-dehydroteasterone + 2 oxidized [NADPH--hemoprotein reductase] + 3 H2O + 2 H(+). It functions in the pathway plant hormone biosynthesis; brassinosteroid biosynthesis. Functionally, catalyzes the C6-oxidation step in brassinosteroids biosynthesis. Converts 6-deoxocastasterone (6-deoxoCS) to castasterone (CS). May also convert 6-deoxoteasterone (6-deoxoTE) to teasterone (TE), 3-dehydro-6-deoxoteasterone (6-deoxo3DT, 6-deoxo-3-DHT) to 3-dehydroteasterone (3DT, 3-DHT), and 6-deoxotyphasterol (6-deoxoTY) to typhasterol (TY). Required for the initiation of female gametogenesis (megagametogenesis). The sequence is that of Cytochrome P450 85A1 from Arabidopsis thaliana (Mouse-ear cress).